We begin with the raw amino-acid sequence, 156 residues long: MPRRGPVAKRDVLPDPIYNSKLVTRLINKIMIDGKKSKAQKILYTAFDIIRERTGKDPMEVFEQALKNVMPVLEVRARRVGGANYQVPVEVRPDRRVSLGLRWLVQYARLRNEKTMEERLANEIMDAANNTGAAVKKREDTHKMAEANKAFAHYRW.

It belongs to the universal ribosomal protein uS7 family. As to quaternary structure, part of the 30S ribosomal subunit. Contacts proteins S9 and S11.

Its function is as follows. One of the primary rRNA binding proteins, it binds directly to 16S rRNA where it nucleates assembly of the head domain of the 30S subunit. Is located at the subunit interface close to the decoding center, probably blocks exit of the E-site tRNA. The chain is Small ribosomal subunit protein uS7 (rpsG) from Geobacillus stearothermophilus (Bacillus stearothermophilus).